A 470-amino-acid polypeptide reads, in one-letter code: FAD-dependent monooxygenase nvfK (470 aa).

An N-terminal signal peptide occupies residues M1–C23. Positions 35, 49, and 108 each coordinate FAD. The N-linked (GlcNAc...) asparagine glycan is linked to N121. Y216 is an active-site residue. D308 and A321 together coordinate FAD. A helical transmembrane segment spans residues I450 to W470.

Belongs to the paxM FAD-dependent monooxygenase family. FAD serves as cofactor.

The protein resides in the membrane. The enzyme catalyses (3R)-3-farnesyl-6-hydroxy-2,3,5-trimethyl-4-oxocyclohexa-1,5-diene-1-carboxylate + 2-oxoglutarate + O2 = (3R)-[(10S)-11-epoxyfarnesyl]-2,3,5-trimethyl-6-oxido-4-oxocyclohexa-1,5-diene-1-carboxylate + succinate + CO2. It participates in secondary metabolite biosynthesis; terpenoid biosynthesis. Functionally, FAD-dependent monooxygenase; part of the gene cluster that mediates the biosynthesis of novofumigatonin, a heavily oxygenated meroterpenoid containing a unique orthoester moiety. The first step of the pathway is the synthesis of 3,5-dimethylorsellinic acid (DMOA) by the polyketide synthase nvfA via condensation of one acetyl-CoA starter unit with 3 malonyl-CoA units and 2 methylations. DMOA is then converted to farnesyl-DMOA by the farnesyltransferase nvfB. Epoxydation by FAD-dependent monooxygenase nvfK, followed by a protonation-initiated cyclization catalyzed by the terpene cyclase nvfL leads to the production of asnavolin H. The short chain dehydrogenase nvfC then as a 3-OH dehydrogenase of asnovolin H to yield chemesin D. There are two branches to synthesize asnovolin A from chemesin D. In one branch, chemesin D undergoes Baeyer-Villiger oxidation by nvfH, methylation by nvfJ, and enoyl reduction by the nvfM D enoylreductase that reduces the double bond between C-5'and C-6', to form respectively asnovolin I, asnovolin K, and asnovolin A. In the other branch, the methylation precedes the Baeyer-Villiger oxidation and the enoyl reduction to yield asnovolin A via the asnovolin J intermediate. Asnovolin A is further converted to fumigatonoid A by the Fe(II)/2-oxoglutarate-dependent dioxygenase nvfI that catalyzes an endoperoxidation reaction. The alpha/beta hydrolase nvfD then acts as an epimerase that converts fumigatonoid A to its C-5' epimer, which then undergoes spontaneous or nvfD-catalyzed lactonization. The following step utilizes the ketoreductase nvfG to produce fumigatonoid B. The dioxygenase nvfE further converts fumigatonoid B into fumigatonoid C. Finally the Fe(II)/2-oxoglutarate-dependent dioxygenase nvfF catalyzes two rounds of oxidation to transform fumigatonoid C into the end product, novofumigatonin A. This chain is FAD-dependent monooxygenase nvfK, found in Aspergillus novofumigatus (strain IBT 16806).